Here is a 375-residue protein sequence, read N- to C-terminus: Mitochondrial phosphate carrier protein 3, mitochondrial (375 aa).

The chain crosses the membrane as a helical span at residues 76-96 (AFYAACTFGGILSCGLTHMTV). 3 Solcar repeats span residues 76-160 (AFYA…FKKT), 173-257 (YKTL…IVEM), and 274-353 (LQLG…FKVF). At 97–134 (TPLDLVKCNMQIDPAKYKSISSGFGILLKEQGVKGFFR) the chain is on the mitochondrial matrix side. Residues 135–154 (GWVPTLLGYSAQGACKFGFY) form a helical membrane-spanning segment. Topologically, residues 155-175 (EYFKKTYSDLAGPEYTAKYKT) are mitochondrial intermembrane. Residues 176–196 (LIYLAGSASAEIIADIALCPF) traverse the membrane as a helical segment. Residues 197–231 (EAVKVRVQTQPGFARGMSDGFPKFIKSEGYGGLYK) lie on the Mitochondrial matrix side of the membrane. The helical transmembrane segment at 232–251 (GLAPLWGRQIPYTMMKFASF) threads the bilayer. Residues 252 to 272 (ETIVEMIYKYAIPNPKSECSK) lie on the Mitochondrial intermembrane side of the membrane. Residues 273-293 (GLQLGVSFAGGYVAGVFCAIV) traverse the membrane as a helical segment. Residues 294 to 332 (SHPADNLVSFLNNAKGATVGDAVKKIGMVGLFTRGLPLR) are Mitochondrial matrix-facing. A helical membrane pass occupies residues 333 to 353 (IVMIGTLTGAQWGLYDAFKVF). Residues 354-375 (VGLPTTGGVAPAPAIAATEAKA) are Mitochondrial intermembrane-facing.

This sequence belongs to the mitochondrial carrier (TC 2.A.29) family. In terms of tissue distribution, expressed in stems, leaves and flowers. Strong expression in vascular tissues.

The protein localises to the mitochondrion inner membrane. Transport of phosphate groups from the cytosol to the mitochondrial matrix. Mediates salt stress tolerance through an ATP-dependent pathway and via modulation of the gibberellin metabolism. The chain is Mitochondrial phosphate carrier protein 3, mitochondrial (MPT3) from Arabidopsis thaliana (Mouse-ear cress).